The sequence spans 255 residues: Phosphoribosylaminoimidazole-succinocarboxamide synthase A (255 aa).

This sequence belongs to the SAICAR synthetase family.

The enzyme catalyses 5-amino-1-(5-phospho-D-ribosyl)imidazole-4-carboxylate + L-aspartate + ATP = (2S)-2-[5-amino-1-(5-phospho-beta-D-ribosyl)imidazole-4-carboxamido]succinate + ADP + phosphate + 2 H(+). It participates in purine metabolism; IMP biosynthesis via de novo pathway; 5-amino-1-(5-phospho-D-ribosyl)imidazole-4-carboxamide from 5-amino-1-(5-phospho-D-ribosyl)imidazole-4-carboxylate: step 1/2. The protein is Phosphoribosylaminoimidazole-succinocarboxamide synthase A (purC1) of Bradyrhizobium diazoefficiens (strain JCM 10833 / BCRC 13528 / IAM 13628 / NBRC 14792 / USDA 110).